Here is an 84-residue protein sequence, read N- to C-terminus: uncharacterized protein (84 aa).

This is an uncharacterized protein from Rickettsia prowazekii (strain Madrid E).